The primary structure comprises 343 residues: Uroporphyrinogen decarboxylase (343 aa).

Residues 23-27, Asp-73, Tyr-150, Ser-205, and His-322 each bind substrate; that span reads RQAGR.

It belongs to the uroporphyrinogen decarboxylase family. Homodimer.

It is found in the cytoplasm. It carries out the reaction uroporphyrinogen III + 4 H(+) = coproporphyrinogen III + 4 CO2. The protein operates within porphyrin-containing compound metabolism; protoporphyrin-IX biosynthesis; coproporphyrinogen-III from 5-aminolevulinate: step 4/4. Functionally, catalyzes the decarboxylation of four acetate groups of uroporphyrinogen-III to yield coproporphyrinogen-III. The protein is Uroporphyrinogen decarboxylase of Cereibacter sphaeroides (strain ATCC 17029 / ATH 2.4.9) (Rhodobacter sphaeroides).